Consider the following 79-residue polypeptide: MAKVTNNRNRKPRKKVCILSAKGIEHVDYKDVELLQRFINNNNKIASRRVTGASARMQRRIANAIKRARFVGLLPYVKE.

It belongs to the bacterial ribosomal protein bS18 family. In terms of assembly, part of the 30S ribosomal subunit. Forms a tight heterodimer with protein bS6.

Binds as a heterodimer with protein bS6 to the central domain of the 16S rRNA, where it helps stabilize the platform of the 30S subunit. This is Small ribosomal subunit protein bS18 from Ureaplasma parvum serovar 3 (strain ATCC 27815 / 27 / NCTC 11736).